The following is a 393-amino-acid chain: Envelope glycoprotein D (393 aa).

An N-terminal signal peptide occupies residues 1-25 (MGGAAARLGAVILFVVIVGLHGVRG). The segment at 25–57 (GKYALADASLKMADPNRFRGKDLPVLDQLTDPP) is interaction with TNFRSF14. The Virion surface portion of the chain corresponds to 26–338 (KYALADASLK…PYHPPATPNN (313 aa)). A Zn(2+)-binding site is contributed by His64. 3 disulfides stabilise this stretch: Cys90–Cys213, Cys130–Cys226, and Cys142–Cys151. N-linked (GlcNAc...) asparagine; by host glycosylation is found at Asn118 and Asn145. Asp239 serves as a coordination point for Zn(2+). The interval 260 to 304 (LKIAGWHGPRAPYTSTLLPPELPETPNATQPELAPEDPEDSALLE) is profusion. The interval 273-300 (TSTLLPPELPETPNATQPELAPEDPEDS) is disordered. The N-linked (GlcNAc...) asparagine; by host glycan is linked to Asn286. The chain crosses the membrane as a helical span at residues 339–363 (MGLIAGAVGGSLLAALVICGIVYWM). The Intravirion segment spans residues 364–393 (RRRTRKAPKRIRLPHIREDDQPSSHQPLFY).

It belongs to the herpesviridae glycoprotein D family. As to quaternary structure, homodimer. Interacts with host receptor TNFRSF14. Interacts with host receptor NECTIN1. Interacts (via profusion domain) with gB; this interaction occurs in the absence of gH/gL. Interacts (via profusion domain) with gH/gL heterodimer; this interaction occurs in the absence of gB. Associates with the gB-gH/gL-gD complex. Interacts (via C-terminus) with UL11 tegument protein. Interacts with host RSAD2.

Its subcellular location is the virion membrane. The protein localises to the host Golgi apparatus. Its function is as follows. Envelope glycoprotein that binds to the host cell entry receptors NECTIN1, TNFRSF14/HVEM and 3-O-sulfated heparan sulfate, promoting the virus entry into host cells. May trigger fusion with host membrane, by recruiting the fusion machinery composed of gB and gH/gL. This Homo sapiens (Human) protein is Envelope glycoprotein D (gD).